We begin with the raw amino-acid sequence, 192 residues long: Protein FAM210B, mitochondrial (192 aa).

Residues 1-58 (MAGLLALLGPAGRVGARVRPRATWLLGATAPCAPPPLALALLPPRLDARLLRTARGDC) constitute a mitochondrion transit peptide. The segment at 57-80 (DCRGHQDPSQATGTTGSSVSCTEE) is disordered. Over residues 63-77 (DPSQATGTTGSSVSC) the composition is skewed to polar residues. A DUF1279 domain is found at 80–191 (EKKQSKSQQL…VGFFKPPAAK (112 aa)). A run of 2 helical transmembrane segments spans residues 99–119 (VGVSLHIGISLISLGIFYMVV) and 150–170 (FVVAYAIHKLFAPVRISITLV).

The protein belongs to the FAM210 family. As to expression, expressed in late erythroblast differentiation stages. Underexpressed in ovarian cancer epithelia cells compared with normal human ovarian surface epithelia.

The protein resides in the mitochondrion. Its subcellular location is the mitochondrion outer membrane. Plays a role in erythroid differentiation. Involved in cell proliferation and tumor cell growth suppression. Involved in the metabolic reprogramming of cancer cells in a PDK4-dependent manner. This Homo sapiens (Human) protein is Protein FAM210B, mitochondrial.